The sequence spans 218 residues: Zinc finger BED domain-containing protein 2 (218 aa).

Over residues Met-1–Gly-11 the composition is skewed to acidic residues. The interval Met-1 to Glu-24 is disordered. The BED-type zinc finger occupies Thr-52–Ser-113. Zn(2+) is bound by residues Cys-78, Cys-81, His-101, and His-106. A disordered region spans residues Ser-104–Gly-137. Residues Met-105 to Gly-114 show a composition bias toward basic and acidic residues.

In terms of tissue distribution, expressed in keratinocytes.

It is found in the nucleus. Functionally, transcriptional regulator which has intrinsic repressor activity and which competes with the transcriptional activator IRF1 for binding to the 5'-[CA]GAA[AC]C[CT]-3' consensus sequence in gene promoters. May thereby play a role in keratinocyte differentiation. The sequence is that of Zinc finger BED domain-containing protein 2 (ZBED2) from Homo sapiens (Human).